Reading from the N-terminus, the 84-residue chain is Molybdopterin synthase sulfur carrier subunit (84 aa).

1-thioglycine; alternate is present on Gly84. The residue at position 84 (Gly84) is a Glycyl adenylate; alternate.

This sequence belongs to the MoaD family. MOCS2A subfamily. Heterotetramer; composed of 2 small (MOCS2A) and 2 large (MOCS2B) subunits. In terms of processing, C-terminal thiocarboxylation occurs in 2 steps, it is first acyl-adenylated (-COAMP) via the hesA/moeB/thiF part of MOCS3, then thiocarboxylated (-COSH) via the rhodanese domain of MOCS3.

Its subcellular location is the cytoplasm. Its pathway is cofactor biosynthesis; molybdopterin biosynthesis. In terms of biological role, acts as a sulfur carrier required for molybdopterin biosynthesis. Component of the molybdopterin synthase complex that catalyzes the conversion of precursor Z into molybdopterin by mediating the incorporation of 2 sulfur atoms into precursor Z to generate a dithiolene group. In the complex, serves as sulfur donor by being thiocarboxylated (-COSH) at its C-terminus by MOCS3. After interaction with MOCS2B, the sulfur is then transferred to precursor Z to form molybdopterin. This chain is Molybdopterin synthase sulfur carrier subunit, found in Caenorhabditis elegans.